A 168-amino-acid chain; its full sequence is Vasopressin-neurophysin 2-copeptin (168 aa).

Positions 1–23 are cleaved as a signal peptide; the sequence is MLAMMLNTTLSACFLSLLALTSA. Residues cysteine 24 and cysteine 29 are joined by a disulfide bond. Glycine 32 is modified (glycine amide). Disulfide bonds link cysteine 45–cysteine 89, cysteine 48–cysteine 62, cysteine 56–cysteine 79, cysteine 63–cysteine 69, cysteine 96–cysteine 108, cysteine 102–cysteine 120, and cysteine 109–cysteine 114. A glycan (N-linked (GlcNAc...) asparagine) is linked at asparagine 135.

This sequence belongs to the vasopressin/oxytocin family. In terms of assembly, interacts with vasopressin receptors V1bR/AVPR1B (Ki=85 pM), V1aR/AVPR1A (Ki=0.6 nM) and V2R/AVPR2 (Ki=4.9 nM). Interacts with oxytocin receptor (OXTR) (Ki=110 nM).

The protein resides in the secreted. Functionally, neurophysin 2 specifically binds vasopressin. Vasopressin has a direct antidiuretic action on the kidney, it also causes vasoconstriction of the peripheral vessels. Acts by binding to vasopressin receptors (V1bR/AVPR1B, V1aR/AVPR1A, and V2R/AVPR2). This is Vasopressin-neurophysin 2-copeptin (Avp) from Rattus norvegicus (Rat).